The primary structure comprises 429 residues: Histidine--tRNA ligase (429 aa).

The protein belongs to the class-II aminoacyl-tRNA synthetase family. Homodimer.

It localises to the cytoplasm. The enzyme catalyses tRNA(His) + L-histidine + ATP = L-histidyl-tRNA(His) + AMP + diphosphate + H(+). This is Histidine--tRNA ligase from Desulfotalea psychrophila (strain LSv54 / DSM 12343).